A 147-amino-acid chain; its full sequence is Transcriptional regulator MraZ (147 aa).

2 consecutive SpoVT-AbrB domains span residues 5–50 (AVAL…PLTA) and 79–122 (AQEE…SDAG).

Belongs to the MraZ family. As to quaternary structure, forms oligomers.

Its subcellular location is the cytoplasm. It localises to the nucleoid. The sequence is that of Transcriptional regulator MraZ from Azoarcus sp. (strain BH72).